Consider the following 979-residue polypeptide: UPF0182 protein BCG_0095 (979 aa).

Transmembrane regions (helical) follow at residues 19–39 (LVTA…LVDI), 63–83 (LAIV…ALLL), 114–134 (LFGW…ASFD), 174–194 (WLFV…YLFG), 211–231 (VQLA…YWLD), 260–280 (KLVL…AIFL), and 288–308 (MAAA…PLLM). Positions 898–948 (GTGRVATAPGGDAASAPPPGAGGPAPPQAVPPPRTTQPPAAPPRGPDVPPA) are disordered. Residues 902-912 (VATAPGGDAAS) show a composition bias toward low complexity. The span at 913 to 946 (APPPGAGGPAPPQAVPPPRTTQPPAAPPRGPDVP) shows a compositional bias: pro residues.

Belongs to the UPF0182 family.

Its subcellular location is the cell membrane. In Mycobacterium bovis (strain BCG / Pasteur 1173P2), this protein is UPF0182 protein BCG_0095.